The following is a 333-amino-acid chain: Serine/threonine-protein phosphatase PP1-beta (333 aa).

Positions 63, 65, 91, and 123 each coordinate Mn(2+). H124 (proton donor) is an active-site residue. Residues H172 and H247 each coordinate Mn(2+). The interval 306-333 (GAGGVGSNRPVTPPRNAPAAQPKKGAKK) is disordered. The segment covering 322-333 (APAAQPKKGAKK) has biased composition (low complexity).

The protein belongs to the PPP phosphatase family. PP-1 subfamily. As to quaternary structure, interacts with lab-1; the interaction is direct. Interacts with knl-1; the interaction is direct. Mn(2+) is required as a cofactor. In terms of tissue distribution, expressed in gonads, nervous system, intestine and muscles.

The protein localises to the cytoplasm. It localises to the nucleus. The enzyme catalyses O-phospho-L-seryl-[protein] + H2O = L-seryl-[protein] + phosphate. It carries out the reaction O-phospho-L-threonyl-[protein] + H2O = L-threonyl-[protein] + phosphate. Inhibited by okadaic acid. In terms of biological role, serine/threonine-protein phosphatase essential for chromosomal dynamics during meiosis and mitosis. During meiosis, promotes chromosomal cohesion and germline immortality via a small RNA-mediated genome silencing pathway. Antagonizes the function of air-2 kinase during meiosis I and mitosis to promote chromatid cohesion and spindle attachment. Dephosphorylates histone H3 at 'Ser-10'. Dephosphorylates histone H3 at 'Thr-3'. Also involved in the activation of chloride channel clh-3 during cell swelling and meiotic maturation. Promotes small RNA-mediated genome silencing over multiple generations. Essential for embryogenesis. The polypeptide is Serine/threonine-protein phosphatase PP1-beta (Caenorhabditis elegans).